The primary structure comprises 273 residues: Large ribosomal subunit protein uL2 (273 aa).

The disordered stretch occupies residues 228-273; it reads VDHPHGGGEGKTSGGRHPVTPWGFPTKGKKTRKNKRTSKFIVKKRK. Over residues 254–273 the composition is skewed to basic residues; sequence KGKKTRKNKRTSKFIVKKRK.

Belongs to the universal ribosomal protein uL2 family. Part of the 50S ribosomal subunit. Forms a bridge to the 30S subunit in the 70S ribosome.

One of the primary rRNA binding proteins. Required for association of the 30S and 50S subunits to form the 70S ribosome, for tRNA binding and peptide bond formation. It has been suggested to have peptidyltransferase activity; this is somewhat controversial. Makes several contacts with the 16S rRNA in the 70S ribosome. The polypeptide is Large ribosomal subunit protein uL2 (Rickettsia canadensis (strain McKiel)).